The sequence spans 441 residues: Glutamate--tRNA ligase 2 (441 aa).

The short motif at 9-19 (PSPTGYIHVGN) is the 'HIGH' region element. The 'KMSKS' region motif lies at 239-243 (ALSKR). Position 242 (Lys-242) interacts with ATP.

The protein belongs to the class-I aminoacyl-tRNA synthetase family. Glutamate--tRNA ligase type 1 subfamily. In terms of assembly, monomer.

The protein resides in the cytoplasm. It carries out the reaction tRNA(Glu) + L-glutamate + ATP = L-glutamyl-tRNA(Glu) + AMP + diphosphate. Functionally, catalyzes the attachment of glutamate to tRNA(Glu) in a two-step reaction: glutamate is first activated by ATP to form Glu-AMP and then transferred to the acceptor end of tRNA(Glu). The polypeptide is Glutamate--tRNA ligase 2 (Cereibacter sphaeroides (strain ATCC 17029 / ATH 2.4.9) (Rhodobacter sphaeroides)).